We begin with the raw amino-acid sequence, 257 residues long: Transmembrane protein 101 (257 aa).

8 helical membrane-spanning segments follow: residues 21 to 40 (VLLT…LYAE), 52 to 72 (VPYL…MSFG), 77 to 97 (WFAL…YIGG), 110 to 130 (YSRT…AGEL), 139 to 159 (SLQS…AYSL), 182 to 202 (LFFV…YVTL), 206 to 226 (ILAV…AYWH), and 233 to 253 (FWNQ…AVIL).

Its subcellular location is the membrane. Its function is as follows. May activate NF-kappa-B signaling pathways. The sequence is that of Transmembrane protein 101 (TMEM101) from Pongo abelii (Sumatran orangutan).